The primary structure comprises 307 residues: Ribosomal RNA small subunit methyltransferase H (307 aa).

Residues 33-35 (GGY), Asp-51, Phe-82, Asp-96, and Gln-103 each bind S-adenosyl-L-methionine.

The protein belongs to the methyltransferase superfamily. RsmH family.

It is found in the cytoplasm. The catalysed reaction is cytidine(1402) in 16S rRNA + S-adenosyl-L-methionine = N(4)-methylcytidine(1402) in 16S rRNA + S-adenosyl-L-homocysteine + H(+). In terms of biological role, specifically methylates the N4 position of cytidine in position 1402 (C1402) of 16S rRNA. This Rickettsia massiliae (strain Mtu5) protein is Ribosomal RNA small subunit methyltransferase H.